The following is a 250-amino-acid chain: Ubiquinone/menaquinone biosynthesis C-methyltransferase UbiE (250 aa).

Residues Thr-74, Asp-94, 122-123 (DA), and Ser-139 each bind S-adenosyl-L-methionine.

It belongs to the class I-like SAM-binding methyltransferase superfamily. MenG/UbiE family.

The enzyme catalyses a 2-demethylmenaquinol + S-adenosyl-L-methionine = a menaquinol + S-adenosyl-L-homocysteine + H(+). It carries out the reaction a 2-methoxy-6-(all-trans-polyprenyl)benzene-1,4-diol + S-adenosyl-L-methionine = a 5-methoxy-2-methyl-3-(all-trans-polyprenyl)benzene-1,4-diol + S-adenosyl-L-homocysteine + H(+). It functions in the pathway quinol/quinone metabolism; menaquinone biosynthesis; menaquinol from 1,4-dihydroxy-2-naphthoate: step 2/2. It participates in cofactor biosynthesis; ubiquinone biosynthesis. Functionally, methyltransferase required for the conversion of demethylmenaquinol (DMKH2) to menaquinol (MKH2) and the conversion of 2-polyprenyl-6-methoxy-1,4-benzoquinol (DDMQH2) to 2-polyprenyl-3-methyl-6-methoxy-1,4-benzoquinol (DMQH2). This Paracoccus denitrificans (strain Pd 1222) protein is Ubiquinone/menaquinone biosynthesis C-methyltransferase UbiE.